The chain runs to 206 residues: Dephospho-CoA kinase (206 aa).

The region spanning 4 to 204 (IVGLTGGIGS…HQYLQLANAQ (201 aa)) is the DPCK domain. Residue 12–17 (GSGKST) coordinates ATP.

This sequence belongs to the CoaE family.

The protein localises to the cytoplasm. The catalysed reaction is 3'-dephospho-CoA + ATP = ADP + CoA + H(+). Its pathway is cofactor biosynthesis; coenzyme A biosynthesis; CoA from (R)-pantothenate: step 5/5. Its function is as follows. Catalyzes the phosphorylation of the 3'-hydroxyl group of dephosphocoenzyme A to form coenzyme A. The polypeptide is Dephospho-CoA kinase (Pasteurella multocida (strain Pm70)).